The sequence spans 483 residues: Protein nucleotidyltransferase YdiU (483 aa).

Residues Gly81, Gly83, Arg84, Lys103, Asp115, Gly116, Arg166, and Arg173 each coordinate ATP. Asp244 (proton acceptor) is an active-site residue. Positions 245 and 254 each coordinate Mg(2+). Residue Asp254 coordinates ATP.

This sequence belongs to the SELO family. Requires Mg(2+) as cofactor. It depends on Mn(2+) as a cofactor.

It carries out the reaction L-seryl-[protein] + ATP = 3-O-(5'-adenylyl)-L-seryl-[protein] + diphosphate. The catalysed reaction is L-threonyl-[protein] + ATP = 3-O-(5'-adenylyl)-L-threonyl-[protein] + diphosphate. It catalyses the reaction L-tyrosyl-[protein] + ATP = O-(5'-adenylyl)-L-tyrosyl-[protein] + diphosphate. The enzyme catalyses L-histidyl-[protein] + UTP = N(tele)-(5'-uridylyl)-L-histidyl-[protein] + diphosphate. It carries out the reaction L-seryl-[protein] + UTP = O-(5'-uridylyl)-L-seryl-[protein] + diphosphate. The catalysed reaction is L-tyrosyl-[protein] + UTP = O-(5'-uridylyl)-L-tyrosyl-[protein] + diphosphate. In terms of biological role, nucleotidyltransferase involved in the post-translational modification of proteins. It can catalyze the addition of adenosine monophosphate (AMP) or uridine monophosphate (UMP) to a protein, resulting in modifications known as AMPylation and UMPylation. In Shewanella halifaxensis (strain HAW-EB4), this protein is Protein nucleotidyltransferase YdiU.